The primary structure comprises 483 residues: Leukocyte immunoglobulin-like receptor subfamily A member 2 (483 aa).

Positions 1–23 are cleaved as a signal peptide; the sequence is MTPILTVLICLGLSLGPRTHVQA. Residues 24–449 lie on the Extracellular side of the membrane; the sequence is GHLPKPTLWA…QHPQDYTVEN (426 aa). Ig-like C2-type domains are found at residues 27 to 113, 117 to 222, 224 to 313, and 324 to 413; these read PKPT…DPLE, TGAY…GVSK, PSLS…DPLD, and PSLS…SDPL. Cys49 and Cys97 are joined by a disulfide. 3 N-linked (GlcNAc...) asparagine glycosylation sites follow: Asn64, Asn103, and Asn138. 2 disulfide bridges follow: Cys143–Cys195 and Cys244–Cys295. Asn279, Asn300, and Asn339 each carry an N-linked (GlcNAc...) asparagine glycan. The cysteines at positions 344 and 395 are disulfide-linked. At Tyr404 the chain carries 3'-nitrotyrosine. Asn429 carries an N-linked (GlcNAc...) asparagine glycan. A helical membrane pass occupies residues 450-470; that stretch reads LIRMGVAGLVLVVLGILLFEA. Residues 471-483 are Cytoplasmic-facing; sequence QHSQRSLQDAAGR.

In terms of assembly, homodimer. Detected on the surface of all peripheral blood monocytes, neutrophils, basophils and eosinophils (at protein level). Expression levels are very low or not detectable on monocytes, T-cells, B-cells, dendritic cells and natural killer (NK) cells.

It is found in the cell membrane. It localises to the secreted. In terms of biological role, part of the innate immune responses against microbial infection. Specifically recognizes a set of N-terminally truncated immunoglobulins that are produced via cleavage by proteases from a range of pathogenic bacteria and fungi, including L.pneumophila, M.hyorhinis, S.pneumoniae, S.aureus and C.albicans. Recognizes epitopes that are in part in the variable region of the immunoglobulin light chains, but requires also the constant region for signaling. Binds to a subset of cleaved IgM, IgG3 and IgG4 molecules, but does not bind cleaved IgA1. Binding of N-terminally truncated immunoglobulins mediates activation of neutrophils. In monocytes, activation leads to the release of CSF2, CF3, IL6, CXCL8 and CCL3 and down-regulates responses to bacterial lipopolysaccharide (LPS), possibly via down-regulation of TLR4 expression and reduced signaling via TLR4. In eosinophils, activation by ligand binding leads to the release of RNASE2, IL4 and leukotriene C4. Does not bind class I MHC antigens. The protein is Leukocyte immunoglobulin-like receptor subfamily A member 2 (LILRA2) of Homo sapiens (Human).